Consider the following 460-residue polypeptide: Cysteine--tRNA ligase (460 aa).

Residue C28 participates in Zn(2+) binding. The 'HIGH' region signature appears at 30–40; the sequence is VTIYDLCHIGH. 3 residues coordinate Zn(2+): C209, H234, and E238. The 'KMSKS' region motif lies at 266–270; the sequence is KMSKS. Residue K269 coordinates ATP.

The protein belongs to the class-I aminoacyl-tRNA synthetase family. As to quaternary structure, monomer. Zn(2+) serves as cofactor.

The protein resides in the cytoplasm. It catalyses the reaction tRNA(Cys) + L-cysteine + ATP = L-cysteinyl-tRNA(Cys) + AMP + diphosphate. The chain is Cysteine--tRNA ligase from Vibrio parahaemolyticus serotype O3:K6 (strain RIMD 2210633).